We begin with the raw amino-acid sequence, 273 residues long: Proteasome subunit beta type-5-B (273 aa).

Positions 1–57 (MKLDTSGLETTMPVIGFGSNSEMLDGFSSAPSFDLPRTTDFDGFQKKAVEMVKPAKG) are cleaved as a propeptide — removed in mature form. Thr58 serves as the catalytic Nucleophile.

It belongs to the peptidase T1B family. In terms of assembly, component of the 20S core complex of the 26S proteasome. The 26S proteasome is composed of a core protease (CP), known as the 20S proteasome, capped at one or both ends by the 19S regulatory particle (RP/PA700). The 20S proteasome core is composed of 28 subunits that are arranged in four stacked rings, resulting in a barrel-shaped structure. The two end rings are each formed by seven alpha subunits, and the two central rings are each formed by seven beta subunits. The catalytic chamber with the active sites is on the inside of the barrel.

Its subcellular location is the cytoplasm. It localises to the nucleus. The enzyme catalyses Cleavage of peptide bonds with very broad specificity.. Functionally, the proteasome is a multicatalytic proteinase complex which is characterized by its ability to cleave peptides with Arg, Phe, Tyr, Leu, and Glu adjacent to the leaving group at neutral or slightly basic pH. The proteasome has an ATP-dependent proteolytic activity. In Arabidopsis thaliana (Mouse-ear cress), this protein is Proteasome subunit beta type-5-B (PBE2).